Reading from the N-terminus, the 238-residue chain is Tyrosine recombinase XerD-like (238 aa).

In terms of domain architecture, Core-binding (CB) spans 1 to 75 (MKLPNEIEEY…SANQYFLFLY (75 aa)). Residues 90–238 (VQKKTQSSES…TITALEKYYR (149 aa)) form the Tyr recombinase domain. Residues Lys-154 and Arg-204 contribute to the active site. The active-site O-(3'-phospho-DNA)-tyrosine intermediate is the Tyr-236.

This sequence belongs to the 'phage' integrase family. XerD-like subfamily.

The protein localises to the cytoplasm. Its function is as follows. Putative tyrosine recombinase. Not involved in the cutting and rejoining of the recombining DNA molecules on dif(SL) site. The protein is Tyrosine recombinase XerD-like of Lactococcus lactis subsp. cremoris (strain SK11).